The sequence spans 328 residues: D-cysteine desulfhydrase (328 aa).

Residue Lys51 is modified to N6-(pyridoxal phosphate)lysine.

This sequence belongs to the ACC deaminase/D-cysteine desulfhydrase family. As to quaternary structure, homodimer. The cofactor is pyridoxal 5'-phosphate.

It carries out the reaction D-cysteine + H2O = hydrogen sulfide + pyruvate + NH4(+) + H(+). In terms of biological role, catalyzes the alpha,beta-elimination reaction of D-cysteine and of several D-cysteine derivatives. It could be a defense mechanism against D-cysteine. This Salmonella typhi protein is D-cysteine desulfhydrase.